The sequence spans 708 residues: MDKYDVIKAIGQGAFGKAYLAKGKSDSKHCVIKEINFEKMPIQEKEASKKEVILLEKMKHPNIVAFFNSFQENGRLFIVMEYCDGGDLMKRINRQRGVLFSEDQILGWFVQISLGLKHIHDRKILHRDIKAQNIFLSKNGMVAKLGDFGIARVLNNSMELARTCIGTPYYLSPEICQNKPYNNKTDIWSLGCVLYELCTLKHPFEGNNLQQLVLKICQAHFAPISPGFSRELHSLISQLFQVSPRDRPSINSILKRPFLENLIPKYLTPEVIQEEFSHMLICRAGAPASRHAGKVVQKCKIQKVRFQGKCPPRSRISVPIKRNAILHRNEWRPPAGAQKARSIKMIERPKIAAVCGHYDYYYAQLDMLRRRAHKPSYHPIPQENTGVEDYGQETRHGPSPSQWPAEYLQRKFEAQQYKLKVEKQLGLRPSSAEPNYNQRQELRSNGEEPRFQELPFRKNEMKEQEYWKQLEEIRQQYHNDMKEIRKKMGREPEENSKISHKTYLVKKSNLPVHQDASEGEAPVQMEFRSCCPGWSAMARSWLTATSASQDIEKDLKQMRLQNTKESKNPEQKYKAKKGVKFEINLDKCISDENILQEEEAMDIPNETLTFEDGMKFKEYECVKEHGDYTDKAFEKLHCPEAGFSTQTVAAVGNRRQWDGGAPQTLLQMMAVADITSTCPTGPDSESVLSVSRQEGKTKDPYSPVLILM.

One can recognise a Protein kinase domain in the interval 4–259; sequence YDVIKAIGQG…INSILKRPFL (256 aa). ATP contacts are provided by residues 10 to 18 and Lys33; that span reads IGQGAFGKA. Asp128 acts as the Proton acceptor in catalysis. Disordered stretches follow at residues 376-403 and 423-454; these read SYHP…PSQW and KQLG…FQEL. Residues 440-454 are compositionally biased toward basic and acidic residues; that stretch reads QELRSNGEEPRFQEL.

It belongs to the protein kinase superfamily. NEK Ser/Thr protein kinase family. NIMA subfamily. Mg(2+) is required as a cofactor.

The protein resides in the cell projection. Its subcellular location is the cilium. It localises to the flagellum. The catalysed reaction is L-seryl-[protein] + ATP = O-phospho-L-seryl-[protein] + ADP + H(+). It catalyses the reaction L-threonyl-[protein] + ATP = O-phospho-L-threonyl-[protein] + ADP + H(+). This Homo sapiens (Human) protein is Serine/threonine-protein kinase Nek5 (NEK5).